The sequence spans 858 residues: Leucine--tRNA ligase (858 aa).

Residues 42 to 52 carry the 'HIGH' region motif; it reads PYPSGNLHMGH. Residues 584-594 are compositionally biased toward polar residues; that stretch reads NPNRSDSSRYI. The tract at residues 584–611 is disordered; the sequence is NPNRSDSSRYIPSNLVDPNDPKDPETGE. A 'KMSKS' region motif is present at residues 619 to 623; sequence TMSKS. Lys622 contacts ATP.

Belongs to the class-I aminoacyl-tRNA synthetase family.

The protein localises to the cytoplasm. The catalysed reaction is tRNA(Leu) + L-leucine + ATP = L-leucyl-tRNA(Leu) + AMP + diphosphate. The sequence is that of Leucine--tRNA ligase from Cyanothece sp. (strain PCC 7425 / ATCC 29141).